Consider the following 541-residue polypeptide: CTP synthase (541 aa).

Residues 1–271 (MVGKLNPTRF…DTQILKHFDV (271 aa)) form an amidoligase domain region. CTP is bound at residue S19. S19 contacts UTP. ATP is bound by residues 20-25 (SLGKGL) and D77. 2 residues coordinate Mg(2+): D77 and E145. CTP contacts are provided by residues 152–154 (DIE), 192–197 (KTKPTQ), and K228. UTP contacts are provided by residues 192-197 (KTKPTQ) and K228. One can recognise a Glutamine amidotransferase type-1 domain in the interval 296–537 (VIAIVGKYVT…VTSTLQVKKA (242 aa)). G355 serves as a coordination point for L-glutamine. C382 (nucleophile; for glutamine hydrolysis) is an active-site residue. L-glutamine-binding positions include 383–386 (LGMQ), E406, and R465. Residues H510 and E512 contribute to the active site.

The protein belongs to the CTP synthase family. In terms of assembly, homotetramer.

It catalyses the reaction UTP + L-glutamine + ATP + H2O = CTP + L-glutamate + ADP + phosphate + 2 H(+). The catalysed reaction is L-glutamine + H2O = L-glutamate + NH4(+). It carries out the reaction UTP + NH4(+) + ATP = CTP + ADP + phosphate + 2 H(+). The protein operates within pyrimidine metabolism; CTP biosynthesis via de novo pathway; CTP from UDP: step 2/2. Its activity is regulated as follows. Allosterically activated by GTP, when glutamine is the substrate; GTP has no effect on the reaction when ammonia is the substrate. The allosteric effector GTP functions by stabilizing the protein conformation that binds the tetrahedral intermediate(s) formed during glutamine hydrolysis. Inhibited by the product CTP, via allosteric rather than competitive inhibition. Its function is as follows. Catalyzes the ATP-dependent amination of UTP to CTP with either L-glutamine or ammonia as the source of nitrogen. Regulates intracellular CTP levels through interactions with the four ribonucleotide triphosphates. This is CTP synthase from Anaplasma phagocytophilum (strain HZ).